The chain runs to 295 residues: Pyridoxal 5'-phosphate synthase subunit PdxS (295 aa).

D25 is a D-ribose 5-phosphate binding site. The active-site Schiff-base intermediate with D-ribose 5-phosphate is the K82. G154 is a binding site for D-ribose 5-phosphate. Position 166 (R166) interacts with D-glyceraldehyde 3-phosphate. D-ribose 5-phosphate contacts are provided by residues G215 and 236–237 (GS).

It belongs to the PdxS/SNZ family. In the presence of PdxT, forms a dodecamer of heterodimers.

It carries out the reaction aldehydo-D-ribose 5-phosphate + D-glyceraldehyde 3-phosphate + L-glutamine = pyridoxal 5'-phosphate + L-glutamate + phosphate + 3 H2O + H(+). It participates in cofactor biosynthesis; pyridoxal 5'-phosphate biosynthesis. In terms of biological role, catalyzes the formation of pyridoxal 5'-phosphate from ribose 5-phosphate (RBP), glyceraldehyde 3-phosphate (G3P) and ammonia. The ammonia is provided by the PdxT subunit. Can also use ribulose 5-phosphate and dihydroxyacetone phosphate as substrates, resulting from enzyme-catalyzed isomerization of RBP and G3P, respectively. This Haemophilus ducreyi (strain 35000HP / ATCC 700724) protein is Pyridoxal 5'-phosphate synthase subunit PdxS.